The sequence spans 173 residues: Spermidine N(1)-acetyltransferase (173 aa).

Residues 5–162 (LTLRALERGD…GRYQDVKRMY (158 aa)) form the N-acetyltransferase domain. Residues Met-28, Glu-33, Glu-41, and 49–52 (HIHD) contribute to the spermine site. Residue Glu-33 coordinates Mg(2+). Spermidine-binding residues include Glu-33 and Glu-41. Glu-75 contacts Mg(2+). 84 to 86 (EFQ) is a binding site for spermine. Acetyl-CoA-binding positions include 87 to 89 (III), 94 to 100 (QGKGFAR), and 127 to 136 (NPKAVHLYEE). Tyr-134 functions as the Proton donor in the catalytic mechanism.

This sequence belongs to the acetyltransferase family. As to quaternary structure, homododecamer; dimer of hexamers. Exists in solution in a variety of protein homooligomeric states including dodecamers in an open state. The presence of the polyamines spermidine or spermine shifts the equilibrium to dodecamers and induces the formation of the closed, symmetric dodecamers.

The protein localises to the cytoplasm. It carries out the reaction an alkane-alpha,omega-diamine + acetyl-CoA = an N-acetylalkane-alpha,omega-diamine + CoA + H(+). The enzyme catalyses spermidine + acetyl-CoA = N(1)-acetylspermidine + CoA + H(+). It catalyses the reaction spermidine + acetyl-CoA = N(8)-acetylspermidine + CoA + H(+). The catalysed reaction is spermine + acetyl-CoA = N(1)-acetylspermine + CoA + H(+). Its pathway is amine and polyamine degradation; spermidine degradation. It participates in amine and polyamine degradation; spermine degradation. Its activity is regulated as follows. Allosterically regulated by polyamines. Polyamines trigger conformational changes and induce the symmetric closed dodecameric state of the protein when they bind to their allosteric sites. Involved in the protection against polyamine toxicity by regulating their concentration. Catalyzes the transfer of an acetyl group from acetyl coenzyme A (AcCoA) to the primary amino groups of spermidine to yield N(1)- and N(8)-acetylspermidine. It can use polyamines such as spermine and N(1)-acetylspermine, but not putrescine or cadaverine. The sequence is that of Spermidine N(1)-acetyltransferase (speG) from Vibrio cholerae serotype O1 (strain ATCC 39315 / El Tor Inaba N16961).